The sequence spans 440 residues: MNPSQILENLKKELNENEYENYLSNLKFNEKQSKADLLVFNAPNELMAKFIQTKYGKKIAHFYEVQSGNKAIINIQAQSTKQSNKSTKIDIAHIQAQSTILNPSFTFESFVVGDSNKYAYGACKAIAHKDKLGKLYNPIFVYGPTGLGKTHLLQAVGNASLEMGKKVIYATSENFINDFTSNLKNGSLDKFHEKYRNCDVLLIDDVQFLGKTDKIQEEFFFIFNEIKNNDGQIIMTSDNPPNMLKGITERLKSRFAHGIIADITPPQLDTKIAIIRKKCEFNDINLSNDIINYIATSLGDNIREIEGIIISLNAYATILGQEITLELAKSVMKDHIKEKKENITIDDILSLVCKEFNIKPSDVKSNKKTQNIVTARRIVIYLARTLTALTMPQLANYFEMKDHTAISHNVKKITEMIENDTSLKAKIEELKNKILIKSQS.

Residues 1 to 74 form a domain I, interacts with DnaA modulators region; sequence MNPSQILENL…VQSGNKAIIN (74 aa). The segment at 74–99 is domain II; the sequence is NIQAQSTKQSNKSTKIDIAHIQAQST. Residues 100–316 are domain III, AAA+ region; that stretch reads ILNPSFTFES…GIIISLNAYA (217 aa). Glycine 146, glycine 148, lysine 149, and threonine 150 together coordinate ATP. The segment at 317-440 is domain IV, binds dsDNA; sequence TILGQEITLE…KNKILIKSQS (124 aa).

This sequence belongs to the DnaA family. Oligomerizes as a right-handed, spiral filament on DNA at oriC.

The protein localises to the cytoplasm. Functionally, plays an essential role in the initiation and regulation of chromosomal replication. ATP-DnaA binds to the origin of replication (oriC) to initiate formation of the DNA replication initiation complex once per cell cycle. Binds the DnaA box (a 9 base pair repeat at the origin) and separates the double-stranded (ds)DNA. Forms a right-handed helical filament on oriC DNA; dsDNA binds to the exterior of the filament while single-stranded (ss)DNA is stabiized in the filament's interior. The ATP-DnaA-oriC complex binds and stabilizes one strand of the AT-rich DNA unwinding element (DUE), permitting loading of DNA polymerase. After initiation quickly degrades to an ADP-DnaA complex that is not apt for DNA replication. Binds acidic phospholipids. In Campylobacter jejuni subsp. doylei (strain ATCC BAA-1458 / RM4099 / 269.97), this protein is Chromosomal replication initiator protein DnaA.